A 434-amino-acid polypeptide reads, in one-letter code: Glutamyl-tRNA reductase (434 aa).

Residues T57–R60, S116, E121–Q123, and Q127 each bind substrate. Residue C58 is the Nucleophile of the active site. G196 to I201 lines the NADP(+) pocket.

The protein belongs to the glutamyl-tRNA reductase family. In terms of assembly, homodimer.

The enzyme catalyses (S)-4-amino-5-oxopentanoate + tRNA(Glu) + NADP(+) = L-glutamyl-tRNA(Glu) + NADPH + H(+). The protein operates within porphyrin-containing compound metabolism; protoporphyrin-IX biosynthesis; 5-aminolevulinate from L-glutamyl-tRNA(Glu): step 1/2. Catalyzes the NADPH-dependent reduction of glutamyl-tRNA(Glu) to glutamate 1-semialdehyde (GSA). This chain is Glutamyl-tRNA reductase, found in Burkholderia pseudomallei (strain 1106a).